The following is a 502-amino-acid chain: MEKFQGYLEFDGARQQSFLYPLFFRDYIYVLAYDHGLNRLNRNRPIFLENADYDKKYSSLIVKRLILRMYEQNRLIIPTKDLNKNLGHTNNFYYQMISVLFAVIVEIPFSLRLGSSIEGKNVKKSYNLQSLHSIFPFLEDKLSHFNYVLDVLIPYPIHLEILVQTLRYRVKDASSLHFFRFCLYEYCNWKNFDSKKKSILNPRFLLFLYNSHVCEYESIFFFLRKQSSHLRSTSYDVFFERILFYGKIQHFFKVFVNNFSALLGLLKDPFLHYVRYHGKYILATKDTPLLMNKWKYYFVNLWQCYFSVWFQSQKVNINQLSKDNLEFLGYLSSLRLNPLVVRSQLLENSFLIDNVRIKLDSNIPISSIIGSLAKDKFCNVLGHPISKATWTDSSDSDILNRFVRICRNISHYYSGSSNKKNLYRIKYILRLCCVKTLARKHKSTVRAFLKRLGSGLLEEFLTGEDQVLSLIFPRSDYASKRLYRVRVWYLDILYLNDLVNHE.

Belongs to the intron maturase 2 family. MatK subfamily.

It localises to the plastid. It is found in the chloroplast. Its function is as follows. Usually encoded in the trnK tRNA gene intron. Probably assists in splicing its own and other chloroplast group II introns. This Brassica oleracea (Wild cabbage) protein is Maturase K.